The following is a 1701-amino-acid chain: DDB1- and CUL4-associated factor homolog 1 (1701 aa).

Polar residues predominate over residues 224 to 245 (HAEQSTSNGTSIPSIKITSVDG). Disordered regions lie at residues 224-269 (HAEQ…RRTE), 883-906 (DRPASRSINTPILNKPLPSSGNNF), and 932-961 (RPSNAASLSSPAMATRSHSTDDDVFATPTL). The region spanning 851–883 (NQAELLQLIHDHLLKSKLDSVAAMLKSEAKLPD) is the LisH domain. Positions 888–906 (RSINTPILNKPLPSSGNNF) are enriched in polar residues. WD repeat units follow at residues 1086 to 1125 (DHDESYTKATFSVDDEHLIVGLFNGEVHWINVDTGLDEGH), 1128 to 1169 (CHGS…QRVH), 1171 to 1210 (YREDSCVKFANTTMQRIVGTCRDKATVYDTETNHVLDTYL), and 1215 to 1252 (GLQYEKNYASFSPDDKLIFNDGLLWDVRKKNSAIHVFD). Short sequence motifs (DWD box) lie at residues 1237 to 1245 (LLWDVRKKN) and 1275 to 1282 (EVYDIRTF). 3 disordered regions span residues 1384–1559 (IGRL…DINL), 1566–1585 (EARVVENEGNNERPARPVDP), and 1641–1701 (LVRG…DDEA). Composition is skewed to acidic residues over residues 1390-1423 (NEDENDEEEDEQREDHDEDEDSDESGDGDDDEEI) and 1451-1461 (DDNDTLDDLDF). Positions 1468–1479 (IIRRQAQRRRQR) are enriched in basic residues. 2 stretches are compositionally biased toward acidic residues: residues 1494 to 1512 (EGSDEDGDDDEDGEGDPDF) and 1520 to 1543 (DLVDAVDEEVDEDELGTDGDDDDS). Over residues 1567-1581 (ARVVENEGNNERPAR) the composition is skewed to basic and acidic residues. Residues 1667–1678 (DTDEYQSEEEEI) show a composition bias toward acidic residues.

Belongs to the VPRBP/DCAF1 family. In terms of assembly, component of the cul4-rbx1-ddb1-dcaf1 E3 ubiquitin-protein ligase complex.

The protein localises to the nucleus. It participates in protein modification; protein ubiquitination. Functionally, component of the cul4-rbx1-ddb1-dcaf1 E3 ubiquitin-protein ligase complex, dcaf1 may function as the substrate recognition module within this complex. The chain is DDB1- and CUL4-associated factor homolog 1 (dcaf-1) from Caenorhabditis elegans.